The chain runs to 203 residues: Thymidylate kinase (203 aa).

10–17 contacts ATP; that stretch reads GIDGAGKS.

Belongs to the thymidylate kinase family.

The enzyme catalyses dTMP + ATP = dTDP + ADP. Functionally, phosphorylation of dTMP to form dTDP in both de novo and salvage pathways of dTTP synthesis. The protein is Thymidylate kinase of Cupriavidus pinatubonensis (strain JMP 134 / LMG 1197) (Cupriavidus necator (strain JMP 134)).